The following is a 140-amino-acid chain: GTP-dependent dephospho-CoA kinase (140 aa).

GTP-binding residues include Asp-21, Val-22, Val-23, Asp-40, Lys-42, and Glu-92.

Belongs to the GTP-dependent DPCK family.

It catalyses the reaction 3'-dephospho-CoA + GTP = GDP + CoA + H(+). Its pathway is cofactor biosynthesis; coenzyme A biosynthesis. Its function is as follows. Catalyzes the GTP-dependent phosphorylation of the 3'-hydroxyl group of dephosphocoenzyme A to form coenzyme A (CoA). This Pyrobaculum aerophilum (strain ATCC 51768 / DSM 7523 / JCM 9630 / CIP 104966 / NBRC 100827 / IM2) protein is GTP-dependent dephospho-CoA kinase.